Here is a 222-residue protein sequence, read N- to C-terminus: Latexin (222 aa).

Residues 1-97 enclose the Cystatin LXN-type 1 domain; the sequence is MEIPPTNYPA…NFTFEGETGK (97 aa). An N6-acetyllysine modification is found at Lys-55. The tract at residues 98–117 is alpha-helical linker; it reads NPDEEDNTFYQRLKSMKEPL. One can recognise a Cystatin LXN-type 2 domain in the interval 118 to 222; sequence EAQNIPDNFG…SRLPKEVQLE (105 aa).

It belongs to the protease inhibitor I47 (latexin) family. In terms of tissue distribution, highly expressed in heart, prostate, ovary, kidney, pancreas, and colon, moderate or low in other tissues including brain.

The protein localises to the cytoplasm. Functionally, hardly reversible, non-competitive, and potent inhibitor of CPA1, CPA2 and CPA4. May play a role in inflammation. The protein is Latexin (LXN) of Homo sapiens (Human).